The chain runs to 239 residues: LexA repressor (239 aa).

The H-T-H motif DNA-binding region spans 26-46 (FDEMKDALDLASKSGIHRLIT). Residues 80 to 108 (RRGFSPSVIEGSLGKPQPAAAPAPAKPVA) are disordered. Active-site for autocatalytic cleavage activity residues include Ser159 and Lys197.

This sequence belongs to the peptidase S24 family. In terms of assembly, homodimer.

The enzyme catalyses Hydrolysis of Ala-|-Gly bond in repressor LexA.. Represses a number of genes involved in the response to DNA damage (SOS response), including recA and lexA. In the presence of single-stranded DNA, RecA interacts with LexA causing an autocatalytic cleavage which disrupts the DNA-binding part of LexA, leading to derepression of the SOS regulon and eventually DNA repair. The polypeptide is LexA repressor (Rhizobium leguminosarum bv. trifolii (strain WSM2304)).